A 162-amino-acid polypeptide reads, in one-letter code: Putative auxin-responsive protein IAA28 (162 aa).

In terms of domain architecture, PB1 spans 23 to 118; it reads SRFVKVFMHG…TVKRIYIVPA (96 aa). The interval 122 to 141 is disordered; sequence NESEYQEEEEDNAAAAATAD.

It belongs to the Aux/IAA family. In terms of assembly, homodimers and heterodimers.

It localises to the nucleus. Its function is as follows. Aux/IAA proteins are short-lived transcriptional factors that function as repressors of early auxin response genes at low auxin concentrations. The polypeptide is Putative auxin-responsive protein IAA28 (IAA28) (Oryza sativa subsp. japonica (Rice)).